Consider the following 260-residue polypeptide: Carbonic anhydrase 3 (260 aa).

The residue at position 2 (A2) is an N-acetylalanine. An Alpha-carbonic anhydrase domain is found at 3–259 (KEWGYASHNG…IKGRVVRASF (257 aa)). Residues S29, S43, S48, S50, and S55 each carry the phosphoserine modification. An involved in proton transfer region spans residues 64-67 (KTCR). A Phosphothreonine modification is found at T73. Residues H94, H96, and H119 each coordinate Zn(2+). Y127 carries the post-translational modification Phosphotyrosine. Position 129 is a phosphothreonine (T129). S-glutathionyl cysteine occurs at positions 182 and 187. Position 198 to 199 (198 to 199 (TT)) interacts with substrate. Phosphothreonine is present on T216. Position 219 is a phosphoserine (S219).

The protein belongs to the alpha-carbonic anhydrase family. It depends on Zn(2+) as a cofactor. In terms of processing, S-thiolated both by thiol-disulfide exchange with glutathione disulfide and by oxyradical-initiated S-thiolation with reduced glutathione. S-glutathionylated in hepatocytes under oxidative stress. In terms of tissue distribution, expressed in liver and muscle.

Its subcellular location is the cytoplasm. The enzyme catalyses hydrogencarbonate + H(+) = CO2 + H2O. With respect to regulation, inhibited by acetazolamide. Its function is as follows. Reversible hydration of carbon dioxide. The polypeptide is Carbonic anhydrase 3 (Ca3) (Rattus norvegicus (Rat)).